Reading from the N-terminus, the 754-residue chain is Condensin complex subunit 2 (754 aa).

The segment at 104 to 149 is disordered; that stretch reads LAQRKTNGASNGDDSNGGNGEGLGGDSDEANIEIDPLTGMPISNDP. Gly residues predominate over residues 118-128; that stretch reads SNGGNGEGLGG. Ser-245 carries the phosphoserine modification. The disordered stretch occupies residues 359-379; sequence CYPDENHDNTSHDEQDDDNVN. The span at 362-371 shows a compositional bias: basic and acidic residues; the sequence is DENHDNTSHD. A Phosphoserine modification is found at Ser-548. Positions 665-688 are disordered; sequence HDSRKNREQSSNDSETHTEDESTK.

This sequence belongs to the CND2 (condensin subunit 2) family. In terms of assembly, component of the condensin complex, which contains the SMC2 and SMC4 heterodimer, and three non SMC subunits that probably regulate the complex: BRN1, YCS4 and YCG1/YCS5.

It localises to the nucleus. The protein resides in the cytoplasm. It is found in the chromosome. Functionally, regulatory subunit of the condensin complex, a complex required for conversion of interphase chromatin into mitotic-like condense chromosomes. The condensin complex probably introduces positive supercoils into relaxed DNA in the presence of type I topoisomerases and converts nicked DNA into positive knotted forms in the presence of type II topoisomerases. The condensin complex probably also plays a role during interphase. This chain is Condensin complex subunit 2 (BRN1), found in Saccharomyces cerevisiae (strain ATCC 204508 / S288c) (Baker's yeast).